Here is a 77-residue protein sequence, read N- to C-terminus: Large ribosomal subunit protein uL29 (77 aa).

This sequence belongs to the universal ribosomal protein uL29 family.

The polypeptide is Large ribosomal subunit protein uL29 (Corynebacterium jeikeium (strain K411)).